A 334-amino-acid polypeptide reads, in one-letter code: N-acetyl-gamma-glutamyl-phosphate reductase (334 aa).

The active site involves cysteine 154.

Belongs to the NAGSA dehydrogenase family. Type 1 subfamily.

It is found in the cytoplasm. The enzyme catalyses N-acetyl-L-glutamate 5-semialdehyde + phosphate + NADP(+) = N-acetyl-L-glutamyl 5-phosphate + NADPH + H(+). It participates in amino-acid biosynthesis; L-arginine biosynthesis; N(2)-acetyl-L-ornithine from L-glutamate: step 3/4. In terms of biological role, catalyzes the NADPH-dependent reduction of N-acetyl-5-glutamyl phosphate to yield N-acetyl-L-glutamate 5-semialdehyde. This chain is N-acetyl-gamma-glutamyl-phosphate reductase, found in Pectobacterium carotovorum subsp. carotovorum (strain PC1).